A 204-amino-acid chain; its full sequence is MEPKASCPAAAPLMERKFHVLVGVTGSVAALKLPLLVSKLLDIPGLEVAVVTTERAKHFYSPQDIPVTLYSDADEWEIWKSRSDPVLHIDLRRWADLLLVAPLDANTLGKVASGICDNLLTCVMRAWDRSKPLLFCPAMNTAMWEHPITAQQVDQLKAFGYVEIPCVAKKLVCGDEGLGAMAEVGTIVDKVKEVLFQHSGFQQS.

Residues Phe59 and 104-107 (DANT) each bind FMN. Residue Asn140 coordinates substrate. The active-site Proton donor is the Cys173.

This sequence belongs to the HFCD (homooligomeric flavin containing Cys decarboxylase) superfamily. As to quaternary structure, homotrimer. Requires FMN as cofactor.

It catalyses the reaction N-[(R)-4-phosphopantothenoyl]-L-cysteine + H(+) = (R)-4'-phosphopantetheine + CO2. Its pathway is cofactor biosynthesis; coenzyme A biosynthesis; CoA from (R)-pantothenate: step 3/5. Catalyzes the decarboxylation of the cysteine moiety of 4-phosphopantothenoylcysteine to form 4'-phosphopantotheine and this reaction forms part of the biosynthesis of coenzyme A. This chain is Phosphopantothenoylcysteine decarboxylase (PPCDC), found in Homo sapiens (Human).